We begin with the raw amino-acid sequence, 64 residues long: Putative neurotoxin-H (64 aa).

The signal sequence occupies residues 1–19 (MYATVTVTVLLLISSGIFC). 3 cysteine pairs are disulfide-bonded: cysteine 25-cysteine 45, cysteine 32-cysteine 54, and cysteine 36-cysteine 56.

Expressed by the venom gland.

The protein resides in the secreted. The protein is Putative neurotoxin-H of Lychas mucronatus (Chinese swimming scorpion).